The following is a 69-amino-acid chain: Small ribosomal subunit protein bS21 (69 aa).

This sequence belongs to the bacterial ribosomal protein bS21 family.

This is Small ribosomal subunit protein bS21 (rpsU) from Treponema pallidum (strain Nichols).